The chain runs to 443 residues: MREIVHIQGGQCGNQIGAKFWEVISDEHGIDPTGTYHGDSDLQLERINVYYNEATGGRYVPRAILMDLEPGTMDSVRAGPFGQLFRPDNFVFGQTGAGNNWAKGHYTEGAELIDSVLDVVRKEAEGCDCLQGFQITHSLGGGTGSGMGTLLISKVREEYPDRIMETFSVVPSPKVSDTVVEPYNATLSVHQLVENADECMVIDNEALYDICFRTLKLTTPTYGNLNHLVSAAMSGVTCCLRFPGQLNSDLRKLAVNLIPFPRLHFFMIGFAPLTSRGSQQYRALTVPELTQQMFDAKNMMCAADPRHGRYLTASALFRGRMSTKEVDEQMLNVQNKNSSYFVEWIPNNIKSSICDIPPKGLKMAVTFVGNSTAIQEMFKRVAEQFTAMFRRKAFLHWYTGEGMDEMEFTEAESNMNDLVSEYQQYQDATAEEEGEFEEEEGEN.

GTP is bound by residues glutamine 11, glutamate 69, serine 138, glycine 142, threonine 143, glycine 144, asparagine 204, and asparagine 226. Mg(2+) is bound at residue glutamate 69. The disordered stretch occupies residues 424–443 (QYQDATAEEEGEFEEEEGEN). A compositionally biased stretch (acidic residues) spans 429 to 443 (TAEEEGEFEEEEGEN).

Belongs to the tubulin family. As to quaternary structure, dimer of alpha and beta chains. A typical microtubule is a hollow water-filled tube with an outer diameter of 25 nm and an inner diameter of 15 nM. Alpha-beta heterodimers associate head-to-tail to form protofilaments running lengthwise along the microtubule wall with the beta-tubulin subunit facing the microtubule plus end conferring a structural polarity. Microtubules usually have 13 protofilaments but different protofilament numbers can be found in some organisms and specialized cells. Requires Mg(2+) as cofactor.

It localises to the cytoplasm. The protein localises to the cytoskeleton. Tubulin is the major constituent of microtubules, a cylinder consisting of laterally associated linear protofilaments composed of alpha- and beta-tubulin heterodimers. Microtubules grow by the addition of GTP-tubulin dimers to the microtubule end, where a stabilizing cap forms. Below the cap, tubulin dimers are in GDP-bound state, owing to GTPase activity of alpha-tubulin. The polypeptide is Tubulin beta chain (BETA-TT1) (Tetrahymena pyriformis).